The primary structure comprises 363 residues: Aminomethyltransferase (363 aa).

This sequence belongs to the GcvT family. As to quaternary structure, the glycine cleavage system is composed of four proteins: P, T, L and H.

The enzyme catalyses N(6)-[(R)-S(8)-aminomethyldihydrolipoyl]-L-lysyl-[protein] + (6S)-5,6,7,8-tetrahydrofolate = N(6)-[(R)-dihydrolipoyl]-L-lysyl-[protein] + (6R)-5,10-methylene-5,6,7,8-tetrahydrofolate + NH4(+). Functionally, the glycine cleavage system catalyzes the degradation of glycine. The sequence is that of Aminomethyltransferase from Prosthecochloris aestuarii (strain DSM 271 / SK 413).